The chain runs to 623 residues: Glutamine--fructose-6-phosphate aminotransferase [isomerizing] (623 aa).

Residue cysteine 2 is the Nucleophile; for GATase activity of the active site. A Glutamine amidotransferase type-2 domain is found at 2-228 (CGIVGYIGQA…NDQVVTITAD (227 aa)). SIS domains follow at residues 295 to 435 (IDEA…LRGN) and 468 to 613 (LGQD…VDQP). Lysine 618 acts as the For Fru-6P isomerization activity in catalysis.

In terms of assembly, homodimer.

It localises to the cytoplasm. The catalysed reaction is D-fructose 6-phosphate + L-glutamine = D-glucosamine 6-phosphate + L-glutamate. In terms of biological role, catalyzes the first step in hexosamine metabolism, converting fructose-6P into glucosamine-6P using glutamine as a nitrogen source. The sequence is that of Glutamine--fructose-6-phosphate aminotransferase [isomerizing] from Corynebacterium glutamicum (strain ATCC 13032 / DSM 20300 / JCM 1318 / BCRC 11384 / CCUG 27702 / LMG 3730 / NBRC 12168 / NCIMB 10025 / NRRL B-2784 / 534).